The chain runs to 470 residues: 1-aminocyclopropane-1-carboxylate synthase 5 (470 aa).

Positions 47 and 85 each coordinate substrate. At lysine 272 the chain carries N6-(pyridoxal phosphate)lysine. Serine 461 bears the Phosphoserine mark.

This sequence belongs to the class-I pyridoxal-phosphate-dependent aminotransferase family. In terms of assembly, homodimer and heterodimer. In vivo, the relevance of heterodimerization with other ACS enzymes is however unsure. Interacts (via its C-terminal region) with FEI1, FEI2, ETO1, EOL1 and EOL2. Interacts with GRF3. Requires pyridoxal 5'-phosphate as cofactor. Post-translationally, may be processed at its C-terminus. Ubiquitinated. The interaction with ETO1 (and possibly EOL1 and EOL2) mediate its proteasome-dependent degradation. Its stability and degradation plays a central role in ethylene biosynthesis. Expressed in roots and siliques.

It carries out the reaction S-adenosyl-L-methionine = 1-aminocyclopropane-1-carboxylate + S-methyl-5'-thioadenosine + H(+). It functions in the pathway alkene biosynthesis; ethylene biosynthesis via S-adenosyl-L-methionine; ethylene from S-adenosyl-L-methionine: step 1/2. Functionally, 1-aminocyclopropane-1-carboxylate synthase (ACS) enzymes catalyze the conversion of S-adenosyl-L-methionine (SAM) into 1-aminocyclopropane-1-carboxylate (ACC), a direct precursor of ethylene. In Arabidopsis thaliana (Mouse-ear cress), this protein is 1-aminocyclopropane-1-carboxylate synthase 5 (ACS5).